The following is a 226-amino-acid chain: ATP synthase subunit a (226 aa).

The next 6 helical transmembrane spans lie at F17 to A37, L79 to F99, S105 to I125, F134 to V154, L176 to L196, and F199 to A219.

The protein belongs to the ATPase A chain family. F-type ATPases have 2 components, CF(1) - the catalytic core - and CF(0) - the membrane proton channel. CF(1) has five subunits: alpha(3), beta(3), gamma(1), delta(1), epsilon(1). CF(0) has three main subunits: a(1), b(2) and c(9-12). The alpha and beta chains form an alternating ring which encloses part of the gamma chain. CF(1) is attached to CF(0) by a central stalk formed by the gamma and epsilon chains, while a peripheral stalk is formed by the delta and b chains.

The protein localises to the cell inner membrane. Its function is as follows. Key component of the proton channel; it plays a direct role in the translocation of protons across the membrane. This chain is ATP synthase subunit a, found in Campylobacter jejuni subsp. jejuni serotype O:6 (strain 81116 / NCTC 11828).